Consider the following 795-residue polypeptide: Phenylalanine--tRNA ligase beta subunit (795 aa).

The tRNA-binding domain occupies 39–148 (AGQFHGVVVG…IDAPLGVDLR (110 aa)). The B5 domain maps to 401–476 (PQSATITLRR…RIYGYNNIPD (76 aa)). Mg(2+)-binding residues include D454, D460, E463, and E464. The FDX-ACB domain maps to 701–794 (SRFPSNRRDI…LKQRFQASLR (94 aa)).

This sequence belongs to the phenylalanyl-tRNA synthetase beta subunit family. Type 1 subfamily. In terms of assembly, tetramer of two alpha and two beta subunits. The cofactor is Mg(2+).

It is found in the cytoplasm. The enzyme catalyses tRNA(Phe) + L-phenylalanine + ATP = L-phenylalanyl-tRNA(Phe) + AMP + diphosphate + H(+). The polypeptide is Phenylalanine--tRNA ligase beta subunit (Photorhabdus laumondii subsp. laumondii (strain DSM 15139 / CIP 105565 / TT01) (Photorhabdus luminescens subsp. laumondii)).